The chain runs to 360 residues: MVPAAGRRPPRVMRLLGWWQVLLWVLGLPVRGVEVAEESGRLWSEEQPAHPLQVGAVYLGEEELLHDPMGQDRAAEEANAVLGLDTQGDHMVMLSVIPGEAEDKVSSEPSGVTCGAGGAEDSRCNVRESLFSLDGAGAHFPDREEEYYTEPEVAESDAAPTEDSNNTESLKSPKVNCEERNITGLENFTLKILNMSQDLMDFLNPNGSDCTLVLFYTPWCRFSASLAPHFNSLPRAFPALHFLALDASQHSSLSTRFGTVAVPNILLFQGAKPMARFNHTDRTLETLKIFIFNQTGIEAKKNVVVTQADQIGPLPSTLIKSVDWLLVFSLFFLISFIMYATIRTESIRWLIPGQEQEHVE.

Positions 1–32 (MVPAAGRRPPRVMRLLGWWQVLLWVLGLPVRG) are cleaved as a signal peptide. Residues 33 to 321 (VEVAEESGRL…GPLPSTLIKS (289 aa)) are Extracellular-facing. Residues 141–173 (PDREEEYYTEPEVAESDAAPTEDSNNTESLKSP) form a disordered region. The segment covering 143 to 155 (REEEYYTEPEVAE) has biased composition (acidic residues). In terms of domain architecture, Thioredoxin spans 153 to 296 (VAESDAAPTE…LKIFIFNQTG (144 aa)). 4 N-linked (GlcNAc...) asparagine glycosylation sites follow: Asn187, Asn194, Asn206, and Asn293. Residues 322 to 342 (VDWLLVFSLFFLISFIMYATI) traverse the membrane as a helical segment. At 343–360 (RTESIRWLIPGQEQEHVE) the chain is on the cytoplasmic side.

It localises to the cell projection. The protein localises to the cilium membrane. Acts as a positive regulator of ciliary hedgehog signaling. Involved in ciliogenesis. The polypeptide is Thioredoxin domain-containing protein 15 (TXNDC15) (Homo sapiens (Human)).